Here is a 687-residue protein sequence, read N- to C-terminus: DNA-directed RNA polymerase subunit beta' (687 aa).

The Zn(2+) site is built by Cys69, Cys71, Cys87, and Cys90. Residues Asp492, Asp494, and Asp496 each coordinate Mg(2+).

This sequence belongs to the RNA polymerase beta' chain family. RpoC1 subfamily. In terms of assembly, in plastids the minimal PEP RNA polymerase catalytic core is composed of four subunits: alpha, beta, beta', and beta''. When a (nuclear-encoded) sigma factor is associated with the core the holoenzyme is formed, which can initiate transcription. The cofactor is Mg(2+). Requires Zn(2+) as cofactor.

The protein localises to the plastid. Its subcellular location is the chloroplast. It catalyses the reaction RNA(n) + a ribonucleoside 5'-triphosphate = RNA(n+1) + diphosphate. Functionally, DNA-dependent RNA polymerase catalyzes the transcription of DNA into RNA using the four ribonucleoside triphosphates as substrates. The sequence is that of DNA-directed RNA polymerase subunit beta' from Silene latifolia (White campion).